The following is a 410-amino-acid chain: Trans-splicing factor Raa2, chloroplastic (410 aa).

Disordered stretches follow at residues 1–40 (MRTR…QRPA) and 56–106 (AADH…QQQV). Residues 1–46 (MRTRAGAFFGKQRSTSPSGSSTSASRQWLRSSPGRTQRPAAHRVLA) constitute a chloroplast transit peptide. Positions 14–25 (STSPSGSSTSAS) are enriched in low complexity. Over residues 26 to 35 (RQWLRSSPGR) the composition is skewed to polar residues. Over residues 96 to 106 (RQAQRRQQQQV) the composition is skewed to low complexity.

The protein belongs to the pseudouridine synthase TruB family. As to quaternary structure, possibly associated with other factors required for trans-splicing.

It localises to the plastid. The protein resides in the chloroplast. Functionally, required for trans-splicing of exons 2 and 3 of the chloroplast encoded psaA mRNA (a group II intron). It is not known if this protein has pseudouridine activity; mutation of the potential active site residue does not cause loss of trans-splicing. This Chlamydomonas reinhardtii (Chlamydomonas smithii) protein is Trans-splicing factor Raa2, chloroplastic (RAA2).